The primary structure comprises 133 residues: ATP synthase epsilon chain (133 aa).

The protein belongs to the ATPase epsilon chain family. In terms of assembly, F-type ATPases have 2 components, CF(1) - the catalytic core - and CF(0) - the membrane proton channel. CF(1) has five subunits: alpha(3), beta(3), gamma(1), delta(1), epsilon(1). CF(0) has three main subunits: a, b and c.

It is found in the cell membrane. Its function is as follows. Produces ATP from ADP in the presence of a proton gradient across the membrane. The protein is ATP synthase epsilon chain of Bacillus cereus (strain ATCC 14579 / DSM 31 / CCUG 7414 / JCM 2152 / NBRC 15305 / NCIMB 9373 / NCTC 2599 / NRRL B-3711).